The chain runs to 515 residues: 2-isopropylmalate synthase (515 aa).

A Pyruvate carboxyltransferase domain is found at 5 to 268 (VIIFDTTLRD…VCGIDATQIV (264 aa)). Residues Asp14, His202, His204, and Asn239 each coordinate Mn(2+). Residues 394-515 (KFISLSQHSE…QAKLNAQMTP (122 aa)) form a regulatory domain region.

This sequence belongs to the alpha-IPM synthase/homocitrate synthase family. LeuA type 1 subfamily. Homodimer. Mn(2+) is required as a cofactor.

The protein resides in the cytoplasm. The catalysed reaction is 3-methyl-2-oxobutanoate + acetyl-CoA + H2O = (2S)-2-isopropylmalate + CoA + H(+). Its pathway is amino-acid biosynthesis; L-leucine biosynthesis; L-leucine from 3-methyl-2-oxobutanoate: step 1/4. Its function is as follows. Catalyzes the condensation of the acetyl group of acetyl-CoA with 3-methyl-2-oxobutanoate (2-ketoisovalerate) to form 3-carboxy-3-hydroxy-4-methylpentanoate (2-isopropylmalate). The polypeptide is 2-isopropylmalate synthase (Polynucleobacter necessarius subsp. necessarius (strain STIR1)).